A 299-amino-acid polypeptide reads, in one-letter code: Acetylglutamate kinase (299 aa).

Substrate-binding positions include 72–73 (GG), Arg-94, and Asn-196.

The protein belongs to the acetylglutamate kinase family. ArgB subfamily.

The protein resides in the cytoplasm. It catalyses the reaction N-acetyl-L-glutamate + ATP = N-acetyl-L-glutamyl 5-phosphate + ADP. It functions in the pathway amino-acid biosynthesis; L-arginine biosynthesis; N(2)-acetyl-L-ornithine from L-glutamate: step 2/4. Catalyzes the ATP-dependent phosphorylation of N-acetyl-L-glutamate. This Burkholderia ambifaria (strain MC40-6) protein is Acetylglutamate kinase.